A 487-amino-acid polypeptide reads, in one-letter code: Protein nucleotidyltransferase YdiU (487 aa).

ATP contacts are provided by G90, G92, R93, K113, D125, G126, R176, and R183. D252 acts as the Proton acceptor in catalysis. 2 residues coordinate Mg(2+): N253 and D262. D262 contacts ATP.

It belongs to the SELO family. Requires Mg(2+) as cofactor. The cofactor is Mn(2+).

It catalyses the reaction L-seryl-[protein] + ATP = 3-O-(5'-adenylyl)-L-seryl-[protein] + diphosphate. The catalysed reaction is L-threonyl-[protein] + ATP = 3-O-(5'-adenylyl)-L-threonyl-[protein] + diphosphate. The enzyme catalyses L-tyrosyl-[protein] + ATP = O-(5'-adenylyl)-L-tyrosyl-[protein] + diphosphate. It carries out the reaction L-histidyl-[protein] + UTP = N(tele)-(5'-uridylyl)-L-histidyl-[protein] + diphosphate. It catalyses the reaction L-seryl-[protein] + UTP = O-(5'-uridylyl)-L-seryl-[protein] + diphosphate. The catalysed reaction is L-tyrosyl-[protein] + UTP = O-(5'-uridylyl)-L-tyrosyl-[protein] + diphosphate. Functionally, nucleotidyltransferase involved in the post-translational modification of proteins. It can catalyze the addition of adenosine monophosphate (AMP) or uridine monophosphate (UMP) to a protein, resulting in modifications known as AMPylation and UMPylation. The chain is Protein nucleotidyltransferase YdiU from Pseudomonas syringae pv. syringae (strain B728a).